Reading from the N-terminus, the 195-residue chain is UPF0314 protein RHE_CH03951 (195 aa).

4 helical membrane passes run 14–34, 64–84, 128–148, and 150–170; these read AFWF…EYLM, WYTP…YLIL, DSIL…FFAA, and APVA…GYVI.

Belongs to the UPF0314 family.

Its subcellular location is the cell membrane. The chain is UPF0314 protein RHE_CH03951 from Rhizobium etli (strain ATCC 51251 / DSM 11541 / JCM 21823 / NBRC 15573 / CFN 42).